A 152-amino-acid polypeptide reads, in one-letter code: MGESIMEQVEAIIAPVITEQGLELVDVEYVKEGAHWYLRIYIDKEGGVDIDDCTNVSHLVSEVLDKHDPIAQAYMLEVSSPGLERPLKKDEDFERFTGKLVRVLTKEAYQGYKEFTGYLVGLIEDDIVLEYEKEKMAIPRAIVDKANLTFEF.

Belongs to the RimP family.

The protein localises to the cytoplasm. In terms of biological role, required for maturation of 30S ribosomal subunits. The protein is Ribosome maturation factor RimP of Desulfitobacterium hafniense (strain Y51).